The chain runs to 620 residues: MTEMRSAKIMSGRVFAGARALYRAAGVSGDDMGKKPIIAIANSFDEFLPGHVHLNKVGRIVSEAIKEAGGIPREFNTMAVDDGIAMGHTGMLYSLPSRDIIADTVEYQCNAHCADALICIPNCDKVVPGMLMAALRLNIPTVFVSGGPMEAGTTVLADGTVKSTDLIDVMYATADDSVSDEELLNYEKTVCPTCGSCAGMFTANSMNCLTEAIGLALPGNGTILASHSYRKDLFERAAKQVVKIAHQYYDDSDDSVLPRSIATKEAFENAMTMDVAMGGSTNTVLHILAMAQSADVDFTLDDIERISHTVPCICKASPSGKWEISDVHRAGGITGILGELDRAGKLHTNVHSIDYPTLEAKLADWDIMRPTCTEEAQQMYKAAPGHIISPEPWTHTTLFDSLDRDRTNGAIHDIDHPEIHEGGLAVLRGNLAPDGCVVKTAGVPPEIWKFRGPALVVDSQEQAIEVILNDTLKPGMALVIRYEGPKGGPGMQEMLYPTSFVKGKGIGKQVAMLTDGRYSGGSSGLAIGHMAPEAANKGPVALIRNGDIIDIDIEARSVNVELTDEQLDERRRELEAGDGYVAHRNRHVSQALKAYAAFARSADKGATRDPELINKLSGLD.

D82 is a Mg(2+) binding site. C123 is a [2Fe-2S] cluster binding site. Positions 124 and 125 each coordinate Mg(2+). The residue at position 125 (K125) is an N6-carboxylysine. C197 serves as a coordination point for [2Fe-2S] cluster. Position 493 (E493) interacts with Mg(2+). S519 (proton acceptor) is an active-site residue.

Belongs to the IlvD/Edd family. In terms of assembly, homodimer. It depends on [2Fe-2S] cluster as a cofactor. The cofactor is Mg(2+).

It carries out the reaction (2R)-2,3-dihydroxy-3-methylbutanoate = 3-methyl-2-oxobutanoate + H2O. The catalysed reaction is (2R,3R)-2,3-dihydroxy-3-methylpentanoate = (S)-3-methyl-2-oxopentanoate + H2O. It functions in the pathway amino-acid biosynthesis; L-isoleucine biosynthesis; L-isoleucine from 2-oxobutanoate: step 3/4. Its pathway is amino-acid biosynthesis; L-valine biosynthesis; L-valine from pyruvate: step 3/4. Functions in the biosynthesis of branched-chain amino acids. Catalyzes the dehydration of (2R,3R)-2,3-dihydroxy-3-methylpentanoate (2,3-dihydroxy-3-methylvalerate) into 2-oxo-3-methylpentanoate (2-oxo-3-methylvalerate) and of (2R)-2,3-dihydroxy-3-methylbutanoate (2,3-dihydroxyisovalerate) into 2-oxo-3-methylbutanoate (2-oxoisovalerate), the penultimate precursor to L-isoleucine and L-valine, respectively. The polypeptide is Dihydroxy-acid dehydratase (Bifidobacterium longum subsp. infantis (strain ATCC 15697 / DSM 20088 / JCM 1222 / NCTC 11817 / S12)).